Here is a 282-residue protein sequence, read N- to C-terminus: F-actin-capping protein subunit alpha (282 aa).

This sequence belongs to the F-actin-capping protein alpha subunit family. Component of the F-actin capping complex, composed of a heterodimer of an alpha and a beta subunit.

It localises to the cytoplasm. The protein resides in the cytoskeleton. In terms of biological role, F-actin-capping proteins bind in a Ca(2+)-independent manner to the fast growing ends of actin filaments (barbed end) thereby blocking the exchange of subunits at these ends. Unlike other capping proteins (such as gelsolin and severin), these proteins do not sever actin filaments. In Caenorhabditis elegans, this protein is F-actin-capping protein subunit alpha (cap-1).